Reading from the N-terminus, the 1312-residue chain is Cyclic GMP-binding protein D (1312 aa).

The region spanning 26 to 155 (GFSAIKSCSL…EFFKAKKMAR (130 aa)) is the N-terminal Ras-GEF domain. 2 stretches are compositionally biased toward low complexity: residues 206 to 236 (NTMN…SSPN) and 275 to 296 (NGTS…LFNQ). Disordered regions lie at residues 206–244 (NTMN…RSSM) and 260–326 (NFNN…NNVN). Polar residues predominate over residues 297-310 (QPSLSMLNDDGSVQ). Residues 311–326 (NNNNNNNNNNNNNNVN) are compositionally biased toward low complexity. The region spanning 353-582 (LPEAIAKELT…FRLSKIREET (230 aa)) is the Ras-GEF domain. The interval 586–658 (QSLKESNGIG…NCGNGSGISS (73 aa)) is disordered. The span at 591 to 612 (SNGIGNSNSTSGGSSSSLVNKD) shows a compositional bias: low complexity. The segment covering 613-625 (GSGGGGGSGGGGS) has biased composition (gly residues). The span at 630-644 (GDGKGDGKDNRDGRG) shows a compositional bias: basic and acidic residues. A compositionally biased stretch (low complexity) spans 646-657 (GNSNCGNGSGIS). 698–857 (VSSTLSEREW…ATFYKFIGVI (160 aa)) lines the a nucleoside 3',5'-cyclic phosphate pocket. In terms of domain architecture, GRAM spans 940–1006 (SSFRTKFGLS…DKILTVDKNI (67 aa)). Over residues 1059–1087 (QQQQPSQQPSQQQSQSSQLQQSVSASSTT) the composition is skewed to low complexity. 2 disordered regions span residues 1059 to 1108 (QQQQ…IKDL) and 1167 to 1210 (NNIN…NSSI). A nucleoside 3',5'-cyclic phosphate contacts are provided by residues 1105-1218 (IKDL…SNTS) and 1182-1303 (NNNN…LACV).

Promotes the exchange of Ras-bound GDP by GTP. Induces the formation of substrate-attached pseudopodia, that leads to increased adhesion and thereby negatively influencing cell speed and polarity. This chain is Cyclic GMP-binding protein D (gbpD), found in Dictyostelium discoideum (Social amoeba).